Consider the following 180-residue polypeptide: uncharacterized protein (180 aa).

Residues 1 to 22 (MKRSIIAAAVFSSFFMSAGVFA) form the signal peptide.

This sequence belongs to the fimbrial protein family.

In terms of biological role, part of the yehABCD fimbrial operon. Could contribute to adhesion to various surfaces in specific environmental niches. This is an uncharacterized protein from Escherichia coli (strain K12).